An 885-amino-acid chain; its full sequence is Eukaryotic translation initiation factor 3 subunit C (885 aa).

The disordered stretch occupies residues 1-81 (MSFFAKLQGS…SDSDDERQAV (81 aa)). The segment covering 9–28 (GSDSESSSGSESEESILSGS) has biased composition (low complexity). A compositionally biased stretch (acidic residues) spans 55–76 (EESESEEESSDEDEEEMSDSDD). In terms of domain architecture, PCI spans 624-797 (FHMHLNVELL…GVVIFHRVEQ (174 aa)). Residues 822-885 (LDVKLGNQGQ…TTMGRRVTAQ (64 aa)) are disordered. Positions 855–872 (RGTYRGRGGRGGRGGFNQ) are enriched in gly residues.

Belongs to the eIF-3 subunit C family. As to quaternary structure, component of the eukaryotic translation initiation factor 3 (eIF-3) complex.

The protein resides in the cytoplasm. In terms of biological role, component of the eukaryotic translation initiation factor 3 (eIF-3) complex, which is involved in protein synthesis of a specialized repertoire of mRNAs and, together with other initiation factors, stimulates binding of mRNA and methionyl-tRNAi to the 40S ribosome. The eIF-3 complex specifically targets and initiates translation of a subset of mRNAs involved in cell proliferation. The protein is Eukaryotic translation initiation factor 3 subunit C of Cryptococcus neoformans var. neoformans serotype D (strain B-3501A) (Filobasidiella neoformans).